The chain runs to 540 residues: Lysosomal cobalamin transport escort protein LMBD1 (540 aa).

The Extracellular segment spans residues 1-10 (MATSGAASAE). A helical transmembrane segment spans residues 11–31 (LVIGWCIFGLLLLAILAFCWI). The Cytoplasmic portion of the chain corresponds to 32–50 (YVRKYQSRRESEVVSTITA). The chain crosses the membrane as a helical span at residues 51-71 (IFSLAIALITSALLPVDIFLV). The Extracellular portion of the chain corresponds to 72-100 (SYMKNQNGTFKDWANANVSRQIEDTVLYG). N-linked (GlcNAc...) asparagine glycosylation is found at N78 and N88. A helical membrane pass occupies residues 101–121 (YYTLYSVILFCVFFWIPFVYF). The Cytoplasmic segment spans residues 122-144 (YYEEKDDDDTSKCTQIKTALKYT). Residues 145 to 165 (LGFVVICALLLLVGAFVPLNV) traverse the membrane as a helical segment. Residues 166-188 (PNNKNSTEWEKVKSLFEELGSSH) are Extracellular-facing. A glycan (N-linked (GlcNAc...) asparagine) is linked at N170. Residues 189–209 (GLAALSFSISSLTLIGMLAAI) traverse the membrane as a helical segment. Over 210–305 (TYTAYGMSAL…KFCGALRPLK (96 aa)) the chain is Cytoplasmic. The YERL motif; mediates interaction with adapter protein complex 2 and is essential for its function in clathrin-mediated endocytosis of INSR motif lies at 232-235 (YERL). T238 bears the Phosphothreonine mark. The WTKF motif; mediates interaction with adapter protein complex 2 and is essential for its function in clathrin-mediated endocytosis of INSR signature appears at 294–297 (WTKF). The helical transmembrane segment at 306-326 (IVWGIFFILVALLFVISLFLS) threads the bilayer. The Extracellular portion of the chain corresponds to 327 to 364 (NLDKALHSAGIDSGFIIFGANLSNPLNMLLPLLQTVFP). N347 is a glycosylation site (N-linked (GlcNAc...) asparagine). The helical transmembrane segment at 365 to 385 (LDYILITIIIMYFIFTSMAGI) threads the bilayer. Residues 386-408 (RNIGIWFFWIRLYKIRRGRTRPQ) are Cytoplasmic-facing. A helical membrane pass occupies residues 409–429 (ALLFLCMILLLIVLHTSYMIY). The Extracellular portion of the chain corresponds to 430–486 (SLAPQYVMYGSQNYLIETNITSDNHKGNSTLSVPKRCDADAPEDQCTVTRTYLFLHK). Residues N448 and N457 are each glycosylated (N-linked (GlcNAc...) asparagine). A helical transmembrane segment spans residues 487–507 (FWFFSAAYYFGNWAFLGVFLI). The Cytoplasmic portion of the chain corresponds to 508–540 (GLIVSCCKGKKSVIEGVDEDSDISDDEPSVYSA). Residues S528 and S531 each carry the phosphoserine modification.

The protein belongs to the LIMR family. LMBRD1 subfamily. In terms of assembly, (Microbial infection) Interacts with hepatitis delta virus NES (HDAg-L). As to quaternary structure, interacts with ABCD4; this interaction induces the translocation of ABCD4 from the endoplasmic reticulum to the lysosome. Interacts with ABCD4 and MMACHC; this interaction ensures the transport of cobalamin from the lysosome to the cytoplasm. Interacts with INSR, adapter protein complex 2 and clathrin heavy chain. Post-translationally, N-glycosylated. As to expression, isoform 3 is expressed in liver.

It is found in the endoplasmic reticulum membrane. It localises to the lysosome membrane. The protein resides in the cell membrane. The protein localises to the cytoplasmic vesicle. Its subcellular location is the clathrin-coated vesicle. In terms of biological role, lysosomal membrane chaperone required to export cobalamin (vitamin B12) from the lysosome to the cytosol, allowing its conversion to cofactors. Targets ABCD4 transporter from the endoplasmic reticulum to the lysosome. Then forms a complex with lysosomal ABCD4 and cytoplasmic MMACHC to transport cobalamin across the lysosomal membrane. Acts as an adapter protein which plays an important role in mediating and regulating the internalization of the insulin receptor (INSR). Involved in clathrin-mediated endocytosis of INSR via its interaction with adapter protein complex 2. Essential for the initiation of gastrulation and early formation of mesoderm structures during embryogenesis. Functionally, (Microbial infection) May play a role in the assembly of hepatitis delta virus (HDV). The polypeptide is Lysosomal cobalamin transport escort protein LMBD1 (Homo sapiens (Human)).